The chain runs to 408 residues: Homogentisate geranylgeranyltransferase (408 aa).

The transit peptide at 1-62 (MQAVTAAAAA…TVMHKFSAIS (62 aa)) directs the protein to the chloroplast. A run of 9 helical transmembrane segments spans residues 122–142 (HTIF…MKSI), 156–176 (ALTA…LYDI), 194–214 (SVAT…SIGI), 221–241 (LMCA…EAPF), 248–268 (ALLA…LAFF), 286–306 (LVFA…FKDI), 329–349 (VYQL…LVGA), 352–372 (TNLF…LTLW), and 386–406 (VTSF…LIPF).

The protein belongs to the UbiA prenyltransferase family. As to expression, expressed in seeds.

It is found in the plastid. The protein resides in the chloroplast membrane. The enzyme catalyses homogentisate + (2E,6E,10E)-geranylgeranyl diphosphate + H(+) = 6-geranylgeranyl-2-methylbenzene-1,4-diol + CO2 + diphosphate. It functions in the pathway cofactor biosynthesis; tocopherol biosynthesis. Its function is as follows. Involved in the synthesis of tocotrienol (vitamin E). Catalyzes the condensation of homogentisate and geranylgeranyl diphosphate to form 2-methyl-6-geranylgeranylbenzoquinol. Possesses low activity with phytyl diphosphate as substrate. The polypeptide is Homogentisate geranylgeranyltransferase (Hordeum vulgare (Barley)).